The sequence spans 503 residues: Maturase K (503 aa).

Belongs to the intron maturase 2 family. MatK subfamily.

It is found in the plastid. The protein resides in the chloroplast. In terms of biological role, usually encoded in the trnK tRNA gene intron. Probably assists in splicing its own and other chloroplast group II introns. The chain is Maturase K from Liquidambar styraciflua (Sweetgum tree).